Consider the following 556-residue polypeptide: 2-succinyl-5-enolpyruvyl-6-hydroxy-3-cyclohexene-1-carboxylate synthase (556 aa).

This sequence belongs to the TPP enzyme family. MenD subfamily. Homodimer. The cofactor is Mg(2+). It depends on Mn(2+) as a cofactor. Requires thiamine diphosphate as cofactor.

The enzyme catalyses isochorismate + 2-oxoglutarate + H(+) = 5-enolpyruvoyl-6-hydroxy-2-succinyl-cyclohex-3-ene-1-carboxylate + CO2. The protein operates within quinol/quinone metabolism; 1,4-dihydroxy-2-naphthoate biosynthesis; 1,4-dihydroxy-2-naphthoate from chorismate: step 2/7. Its pathway is quinol/quinone metabolism; menaquinone biosynthesis. Its function is as follows. Catalyzes the thiamine diphosphate-dependent decarboxylation of 2-oxoglutarate and the subsequent addition of the resulting succinic semialdehyde-thiamine pyrophosphate anion to isochorismate to yield 2-succinyl-5-enolpyruvyl-6-hydroxy-3-cyclohexene-1-carboxylate (SEPHCHC). The sequence is that of 2-succinyl-5-enolpyruvyl-6-hydroxy-3-cyclohexene-1-carboxylate synthase from Escherichia coli (strain 55989 / EAEC).